A 216-amino-acid polypeptide reads, in one-letter code: Large ribosomal subunit protein uL1A (216 aa).

Phosphoserine is present on residues serine 85 and serine 128.

The protein belongs to the universal ribosomal protein uL1 family. Component of the large ribosomal subunit (LSU). Mature yeast ribosomes consist of a small (40S) and a large (60S) subunit. The 40S small subunit contains 1 molecule of ribosomal RNA (18S rRNA) and at least 33 different proteins. The large 60S subunit contains 3 rRNA molecules (25S, 5.8S and 5S rRNA) and at least 46 different proteins. uL1 forms part of the L1 stalk.

It localises to the cytoplasm. Its function is as follows. Component of the ribosome, a large ribonucleoprotein complex responsible for the synthesis of proteins in the cell. The small ribosomal subunit (SSU) binds messenger RNAs (mRNAs) and translates the encoded message by selecting cognate aminoacyl-transfer RNA (tRNA) molecules. The large subunit (LSU) contains the ribosomal catalytic site termed the peptidyl transferase center (PTC), which catalyzes the formation of peptide bonds, thereby polymerizing the amino acids delivered by tRNAs into a polypeptide chain. The nascent polypeptides leave the ribosome through a tunnel in the LSU and interact with protein factors that function in enzymatic processing, targeting, and the membrane insertion of nascent chains at the exit of the ribosomal tunnel. uL1 forms part of the L1 stalk, a mobile element that plays a role in evacuating the exit-site tRNA. This is Large ribosomal subunit protein uL1A (rpl102) from Schizosaccharomyces pombe (strain 972 / ATCC 24843) (Fission yeast).